The primary structure comprises 269 residues: Tryptophan synthase alpha chain (269 aa).

Residues E56 and D67 each act as proton acceptor in the active site.

This sequence belongs to the TrpA family. In terms of assembly, tetramer of two alpha and two beta chains.

It catalyses the reaction (1S,2R)-1-C-(indol-3-yl)glycerol 3-phosphate + L-serine = D-glyceraldehyde 3-phosphate + L-tryptophan + H2O. It participates in amino-acid biosynthesis; L-tryptophan biosynthesis; L-tryptophan from chorismate: step 5/5. In terms of biological role, the alpha subunit is responsible for the aldol cleavage of indoleglycerol phosphate to indole and glyceraldehyde 3-phosphate. This chain is Tryptophan synthase alpha chain, found in Mycobacterium ulcerans (strain Agy99).